Here is a 490-residue protein sequence, read N- to C-terminus: Bifunctional protein HldE (490 aa).

A ribokinase region spans residues 1 to 330; sequence MNNFDTLLQS…RKILPHASLA (330 aa). 205-208 contributes to the ATP binding site; it reads NRKE. Asp275 is a catalytic residue. The interval 358–490 is cytidylyltransferase; the sequence is FTNGCFDILH…LVEKAREGTS (133 aa).

It in the N-terminal section; belongs to the carbohydrate kinase PfkB family. In the C-terminal section; belongs to the cytidylyltransferase family. Homodimer.

It catalyses the reaction D-glycero-beta-D-manno-heptose 7-phosphate + ATP = D-glycero-beta-D-manno-heptose 1,7-bisphosphate + ADP + H(+). The catalysed reaction is D-glycero-beta-D-manno-heptose 1-phosphate + ATP + H(+) = ADP-D-glycero-beta-D-manno-heptose + diphosphate. The protein operates within nucleotide-sugar biosynthesis; ADP-L-glycero-beta-D-manno-heptose biosynthesis; ADP-L-glycero-beta-D-manno-heptose from D-glycero-beta-D-manno-heptose 7-phosphate: step 1/4. It functions in the pathway nucleotide-sugar biosynthesis; ADP-L-glycero-beta-D-manno-heptose biosynthesis; ADP-L-glycero-beta-D-manno-heptose from D-glycero-beta-D-manno-heptose 7-phosphate: step 3/4. In terms of biological role, catalyzes the phosphorylation of D-glycero-D-manno-heptose 7-phosphate at the C-1 position to selectively form D-glycero-beta-D-manno-heptose-1,7-bisphosphate. Functionally, catalyzes the ADP transfer from ATP to D-glycero-beta-D-manno-heptose 1-phosphate, yielding ADP-D-glycero-beta-D-manno-heptose. The polypeptide is Bifunctional protein HldE (Rhodopseudomonas palustris (strain HaA2)).